A 210-amino-acid chain; its full sequence is Redox-sensing transcriptional repressor Rex (210 aa).

The H-T-H motif DNA-binding region spans 16–55 (VYSRHLTDVDRKGIVTISSGDIAEGVGVSPAQVRKDLAYF). Residue 90–95 (GMGNLG) participates in NAD(+) binding.

This sequence belongs to the transcriptional regulatory Rex family. As to quaternary structure, homodimer.

It is found in the cytoplasm. In terms of biological role, modulates transcription in response to changes in cellular NADH/NAD(+) redox state. This chain is Redox-sensing transcriptional repressor Rex, found in Desulfitobacterium hafniense (strain DSM 10664 / DCB-2).